The sequence spans 553 residues: 3-amino-2-hydroxy-4-methoxybenzoate diazotase (553 aa).

A compositionally biased stretch (low complexity) spans 157 to 167; that stretch reads ALPAAGATGPA. Residues 157-178 form a disordered region; that stretch reads ALPAAGATGPAREGDAPPPAPV.

The protein belongs to the ATP-dependent AMP-binding enzyme family.

The catalysed reaction is 3-amino-2-hydroxy-4-methoxybenzoate + nitrite + ATP = cremeomycin + AMP + diphosphate + H2O. It functions in the pathway antibiotic biosynthesis. Part of a gene cluster involved in the biosynthesis of cremeomycin, a light-sensitive o-diazoquinone with antibacterial and antiproliferative effects. Catalyzes the last step of cremeomycin biosynthesis, the diazotization of 3-amino-2-hydroxy-4-methoxybenzoate (3,2,4-AHMBA) with nitrite to generate cremeomycin. The polypeptide is 3-amino-2-hydroxy-4-methoxybenzoate diazotase (Streptomyces cremeus).